A 1634-amino-acid polypeptide reads, in one-letter code: Protein TIC 214 (1634 aa).

5 helical membrane-spanning segments follow: residues 25–45, 53–73, 94–116, 133–153, and 172–192; these read FIIG…YVAL, ILAL…SFFA, HFIL…LITI, FAWF…LVWI, and IFVI…SIQC. Disordered regions lie at residues 216–242 and 1365–1395; these read RERL…SESE and QQKS…STKS. The span at 1386-1395 shows a compositional bias: basic and acidic residues; sequence KYLEEDSTKS.

Belongs to the TIC214 family. As to quaternary structure, part of the Tic complex.

It localises to the plastid. It is found in the chloroplast inner membrane. In terms of biological role, involved in protein precursor import into chloroplasts. May be part of an intermediate translocation complex acting as a protein-conducting channel at the inner envelope. The protein is Protein TIC 214 of Cuscuta exaltata (Tall dodder).